We begin with the raw amino-acid sequence, 503 residues long: Probable cytosol aminopeptidase (503 aa).

Positions 270 and 275 each coordinate Mn(2+). Lys-282 is an active-site residue. Residues Asp-293, Asp-352, and Glu-354 each coordinate Mn(2+). Arg-356 is an active-site residue.

Belongs to the peptidase M17 family. Requires Mn(2+) as cofactor.

The protein localises to the cytoplasm. The enzyme catalyses Release of an N-terminal amino acid, Xaa-|-Yaa-, in which Xaa is preferably Leu, but may be other amino acids including Pro although not Arg or Lys, and Yaa may be Pro. Amino acid amides and methyl esters are also readily hydrolyzed, but rates on arylamides are exceedingly low.. It carries out the reaction Release of an N-terminal amino acid, preferentially leucine, but not glutamic or aspartic acids.. Functionally, presumably involved in the processing and regular turnover of intracellular proteins. Catalyzes the removal of unsubstituted N-terminal amino acids from various peptides. This is Probable cytosol aminopeptidase from Citrobacter koseri (strain ATCC BAA-895 / CDC 4225-83 / SGSC4696).